Consider the following 431-residue polypeptide: Gamma-glutamyl phosphate reductase (431 aa).

It belongs to the gamma-glutamyl phosphate reductase family.

It is found in the cytoplasm. It carries out the reaction L-glutamate 5-semialdehyde + phosphate + NADP(+) = L-glutamyl 5-phosphate + NADPH + H(+). It participates in amino-acid biosynthesis; L-proline biosynthesis; L-glutamate 5-semialdehyde from L-glutamate: step 2/2. In terms of biological role, catalyzes the NADPH-dependent reduction of L-glutamate 5-phosphate into L-glutamate 5-semialdehyde and phosphate. The product spontaneously undergoes cyclization to form 1-pyrroline-5-carboxylate. The sequence is that of Gamma-glutamyl phosphate reductase from Acetivibrio thermocellus (strain ATCC 27405 / DSM 1237 / JCM 9322 / NBRC 103400 / NCIMB 10682 / NRRL B-4536 / VPI 7372) (Clostridium thermocellum).